The sequence spans 391 residues: MILNCPHFQQQDCVSCQWLEKPYATQLTDKEIDLKRLISPFILQNFTEILPPVQSSQKQFRNKAKMVVSGSVERPILGILKDQIDPQSGIDLCDCPLYPTEFEAIFPILKDFIARAGLVPYNIAKKKGELKYILLTQSRYNQSVMLRFVLRSEQKRPLVERELPNLLAKLPKDSVVSLNIQPQHAAILEGETEIFLTEKTTIEENFNDIPLFIRPQGFFQTNPNVASRLYATAQNWIKDLPIQQFWDLFCGVGGFGLHCAKALQEKNENVQLTGIEISASAIASATQSAAQLQLKNVTFASLDSAQFALNDKGKSPDLVIVNPPRRGIGKPLAEFLNELGTPYLIYSSCNAQTMAKDFEALSNYSLQKVQLFDMFPHTSHYEVLTFLVKKS.

Residues C5, C13, C16, and C95 each contribute to the [4Fe-4S] cluster site. S-adenosyl-L-methionine is bound by residues Q220, F249, E276, and N322. The Nucleophile role is filled by C349.

Belongs to the class I-like SAM-binding methyltransferase superfamily. RNA M5U methyltransferase family. RlmC subfamily.

It catalyses the reaction uridine(747) in 23S rRNA + S-adenosyl-L-methionine = 5-methyluridine(747) in 23S rRNA + S-adenosyl-L-homocysteine + H(+). Catalyzes the formation of 5-methyl-uridine at position 747 (m5U747) in 23S rRNA. The sequence is that of 23S rRNA (uracil(747)-C(5))-methyltransferase RlmC from Actinobacillus pleuropneumoniae serotype 3 (strain JL03).